A 536-amino-acid chain; its full sequence is Lysosomal acid glucosylceramidase (536 aa).

Residues 1–39 (MELSSPSREEYPMPRGRVGIMAASLMGLLLLHTVSWVSG) form the signal peptide. 2 cysteine pairs are disulfide-bonded: C43-C55 and C57-C62. N-linked (GlcNAc...) asparagine glycosylation is found at N58, N98, N185, and N208. The active-site Proton donor is the E274. A glycan (N-linked (GlcNAc...) asparagine) is linked at N309. E379 acts as the Nucleophile in catalysis. N501 is a glycosylation site (N-linked (GlcNAc...) asparagine).

This sequence belongs to the glycosyl hydrolase 30 family. In terms of assembly, interacts with saposin-C. Interacts with SCARB2. Interacts with TCP1. Interacts with GRN; this interaction prevents aggregation of GBA1-SCARB2 complex via interaction with HSPA1A upon stress.

The protein resides in the lysosome membrane. The catalysed reaction is a beta-D-glucosyl-(1&lt;-&gt;1')-N-acylsphing-4-enine + H2O = an N-acylsphing-4-enine + D-glucose. The enzyme catalyses a beta-D-galactosyl-(1&lt;-&gt;1')-N-acylsphing-4-enine + H2O = an N-acylsphing-4-enine + D-galactose. It carries out the reaction cholesteryl 3-beta-D-glucoside + H2O = cholesterol + D-glucose. It catalyses the reaction a beta-D-glucosyl-(1&lt;-&gt;1')-N-acylsphing-4-enine + cholesterol = cholesteryl 3-beta-D-glucoside + an N-acylsphing-4-enine. The catalysed reaction is beta-D-glucosyl-N-(9Z-octadecenoyl)-sphing-4E-enine + cholesterol = N-(9Z-octadecenoyl)-sphing-4-enine + cholesteryl 3-beta-D-glucoside. The enzyme catalyses beta-D-glucosyl-N-octanoylsphing-4E-enine + cholesterol = N-octanoylsphing-4-enine + cholesteryl 3-beta-D-glucoside. It carries out the reaction beta-D-glucosyl-N-dodecanoylsphing-4-enine + cholesterol = N-dodecanoylsphing-4-enine + cholesteryl 3-beta-D-glucoside. It catalyses the reaction beta-D-glucosyl-(1&lt;-&gt;1)-N-octadecanoylsphing-4-enine + cholesterol = N-octadecanoylsphing-4-enine + cholesteryl 3-beta-D-glucoside. The catalysed reaction is beta-D-glucosyl-(1&lt;-&gt;1')-N-(15Z-tetracosenoyl)-sphing-4-enine + cholesterol = N-(15Z-tetracosenoyl)-sphing-4-enine + cholesteryl 3-beta-D-glucoside. The enzyme catalyses a beta-D-galactosyl-(1&lt;-&gt;1')-N-acylsphing-4-enine + cholesterol = cholesteryl 3-beta-D-galactoside + an N-acylsphing-4-enine. It carries out the reaction 1-(beta-D-galactosyl)-N-dodecanoylsphing-4-enine + cholesterol = cholesteryl 3-beta-D-galactoside + N-dodecanoylsphing-4-enine. It catalyses the reaction a beta-D-xylosyl-(1&lt;-&gt;1')-N-acylsphing-4-enine + cholesterol = cholesteryl 3-beta-D-xyloside + an N-acylsphing-4-enine. The catalysed reaction is beta-D-xylosyl-(1&lt;-&gt;1')-N-(9Z-octadecenoyl)-sphing-4-enine + cholesterol = cholesteryl 3-beta-D-xyloside + N-(9Z-octadecenoyl)-sphing-4-enine. It functions in the pathway steroid metabolism; cholesterol metabolism. Its pathway is sphingolipid metabolism. In terms of biological role, glucosylceramidase that catalyzes, within the lysosomal compartment, the hydrolysis of glucosylceramides/GlcCers (such as beta-D-glucosyl-(1&lt;-&gt;1')-N-acylsphing-4-enine) into free ceramides (such as N-acylsphing-4-enine) and glucose. Plays a central role in the degradation of complex lipids and the turnover of cellular membranes. Through the production of ceramides, participates in the PKC-activated salvage pathway of ceramide formation. Catalyzes the glucosylation of cholesterol, through a transglucosylation reaction where glucose is transferred from GlcCer to cholesterol. GlcCer containing mono-unsaturated fatty acids (such as beta-D-glucosyl-N-(9Z-octadecenoyl)-sphing-4-enine) are preferred as glucose donors for cholesterol glucosylation when compared with GlcCer containing same chain length of saturated fatty acids (such as beta-D-glucosyl-N-octadecanoyl-sphing-4-enine). Under specific conditions, may alternatively catalyze the reverse reaction, transferring glucose from cholesteryl 3-beta-D-glucoside to ceramide. Can also hydrolyze cholesteryl 3-beta-D-glucoside producing glucose and cholesterol. Catalyzes the hydrolysis of galactosylceramides/GalCers (such as beta-D-galactosyl-(1&lt;-&gt;1')-N-acylsphing-4-enine), as well as the transfer of galactose between GalCers and cholesterol in vitro, but with lower activity than with GlcCers. Contrary to GlcCer and GalCer, xylosylceramide/XylCer (such as beta-D-xyosyl-(1&lt;-&gt;1')-N-acylsphing-4-enine) is not a good substrate for hydrolysis, however it is a good xylose donor for transxylosylation activity to form cholesteryl 3-beta-D-xyloside. The chain is Lysosomal acid glucosylceramidase (GBA1) from Bos taurus (Bovine).